A 1119-amino-acid polypeptide reads, in one-letter code: Multiple epidermal growth factor-like domains protein 10 (1119 aa).

The first 22 residues, 1 to 22 (MMSSCGPLLLAVSCCLVALTSS), serve as a signal peptide directing secretion. The Extracellular portion of the chain corresponds to 23–851 (LNLDDPNVCS…ALPMDSYQIG (829 aa)). The EMI domain occupies 27–104 (DPNVCSHWES…FYESGDICVP (78 aa)). 15 disulfide bridges follow: Cys31/Cys92, Cys57/Cys66, Cys91/Cys102, Cys102/Cys115, Cys106/Cys121, Cys123/Cys132, Cys145/Cys157, Cys151/Cys164, Cys166/Cys175, Cys188/Cys200, Cys194/Cys207, Cys209/Cys218, Cys231/Cys243, Cys237/Cys250, and Cys252/Cys260. EGF-like domains are found at residues 98-133 (SGDICVPHCAEKCVHGRCVAPNTCQCEPGWGGADCS), 141-176 (WGPHCSSRCQCKNEALCNPITGACICAPGYHGWRCE), 184-219 (YGNNCQQKCLCQNNATCHHITGECVCSPGYTGAFCE), and 227-261 (HGQQCEERCPCQNGGVCHHVTGECSCPAGWGMVCG). The N-linked (GlcNAc...) asparagine glycan is linked to Asn197. Asn272 carries an N-linked (GlcNAc...) asparagine glycan. 2 EGF-like domains span residues 274-304 (SQECQCHNGGICSPSTGQCVCSSGYTGERCQ) and 312-347 (YGIGCSQACRCVNGAQCYHVSGACLCEQGYTGESCE). Intrachain disulfides connect Cys277/Cys285, Cys279/Cys292, Cys294/Cys303, Cys316/Cys328, Cys322/Cys335, and Cys337/Cys346. Asn369 and Asn393 each carry an N-linked (GlcNAc...) asparagine glycan. EGF-like domains follow at residues 401–436 (YGEACQEVCRCQNGADCHSVSGECICAPGYKGSDCA), 444–479 (YGINCTSLCSCKNGAICSPIDGSCSCQAGWHGVDCS), 487–522 (WGLGCNLSCVCGNGGACNALDGKCTCTPGWRGDRCD), 573–608 (WGPNCSLSCNCKNSASCSPDEGACECAPGFRGTTCQ), 616–653 (FGHRCSQACPHCVHSNGPCHHVTGQCECLPGFKGALCN), 666–696 (GGSCTCTNNGTCSPMDGSCQCYPGWIGSDCS), 709–739 (IHTCNCHNGAFCSAYDGECKCTAGWTGLYCT), 747–782 (YGKDCVQACQCENGADCNHISGQCTCRTGFMGRHCE), and 795–825 (RQVCDCLNNSTCDHMTGTCYCNPGWKGTRCD). 3 disulfide bridges follow: Cys405/Cys417, Cys411/Cys424, and Cys426/Cys435. N-linked (GlcNAc...) asparagine glycosylation occurs at Asn447. Disulfide bonds link Cys448–Cys460, Cys454–Cys467, Cys469–Cys478, Cys491–Cys503, Cys497–Cys510, and Cys512–Cys521. Residue Asn492 is glycosylated (N-linked (GlcNAc...) asparagine). Asn576 carries an N-linked (GlcNAc...) asparagine glycan. 18 disulfide bridges follow: Cys577–Cys589, Cys583–Cys596, Cys598–Cys607, Cys620–Cys634, Cys624–Cys641, Cys643–Cys652, Cys669–Cys677, Cys671–Cys684, Cys686–Cys695, Cys712–Cys720, Cys714–Cys727, Cys729–Cys738, Cys751–Cys763, Cys757–Cys770, Cys772–Cys781, Cys798–Cys806, Cys800–Cys813, and Cys815–Cys824. Asn674 is a glycosylation site (N-linked (GlcNAc...) asparagine). Asn803 is a glycosylation site (N-linked (GlcNAc...) asparagine). A helical transmembrane segment spans residues 852–872 (AITGIIILVLLVLILLLLFII). Residues 873–1119 (YRKKQKGKES…SSPSPTEDSK (247 aa)) lie on the Cytoplasmic side of the membrane.

Belongs to the MEGF family.

It is found in the cell membrane. Functionally, membrane receptor involved in phagocytosis by macrophages and astrocytes of apoptotic cells. Essential factor in the regulation of muscle development including myogenesis. Likely plays a key role in muscle cell proliferation, adhesion and motility. May control the balance between skeletal muscle satellite cells proliferation and differentiation through regulation of the notch signaling pathway. This is Multiple epidermal growth factor-like domains protein 10 from Danio rerio (Zebrafish).